A 538-amino-acid polypeptide reads, in one-letter code: MWSGRSSFTSLVVGVFVVYVVHTCWVMYGIVYTRPCSGDANCIQPYLARRPKLQLSVYTTTRSHLGAENNIDLVLNVEDFDVESKFERTVNVSVPKKTRNNGTLYAYIFLHHAGVLPWHDGKQVHLVSPLTTYMVPKPEEINLLTGESDTQQIEAEKKPTSALDEPVSHWRPRLALNVMADNFVFDGSSLPADVHRYMKMIQLGKTVHYLPILFIDQLSNRVKDLMVINRSTTELPLTVSYDKVSLGRLRFWIHMQDAVYSLQQFGFSEKDADEVKGIFVDTNLYFLALTFFVAAFHLLFDFLAFKNDISFWKKKKSMIGMSTKAVLWRCFSTVVIFLFLLDEQTSLLVLVPAGVGAAIELWKVKKALKMTIFWRGLMPEFQFGTYSESERKTEEYDTQAMKYLSYLLYPLCVGGAVYSLLNIKYKSWYSWLINSFVNGVYAFGFLFMLPQLFVNYKLKSVAHLPWKAFTYKAFNTFIDDVFAFIITMPTSHRLACFRDDVVFLVYLYQRWLYPVDKRRVNEFGESYEEKATRAPHTD.

Residues 1–10 (MWSGRSSFTS) lie on the Cytoplasmic side of the membrane. Residues 11–31 (LVVGVFVVYVVHTCWVMYGIV) form a helical membrane-spanning segment. At 32-284 (YTRPCSGDAN…VKGIFVDTNL (253 aa)) the chain is on the extracellular side. N-linked (GlcNAc...) asparagine glycosylation is found at N91, N101, and N229. A helical membrane pass occupies residues 285-305 (YFLALTFFVAAFHLLFDFLAF). Residues 306–324 (KNDISFWKKKKSMIGMSTK) lie on the Cytoplasmic side of the membrane. A helical transmembrane segment spans residues 325–342 (AVLWRCFSTVVIFLFLLD). Residues 343–346 (EQTS) lie on the Extracellular side of the membrane. Residues 347–364 (LLVLVPAGVGAAIELWKV) traverse the membrane as a helical segment. Residues 365 to 402 (KKALKMTIFWRGLMPEFQFGTYSESERKTEEYDTQAMK) lie on the Cytoplasmic side of the membrane. The helical transmembrane segment at 403 to 423 (YLSYLLYPLCVGGAVYSLLNI) threads the bilayer. Topologically, residues 424-428 (KYKSW) are extracellular. Residues 429-449 (YSWLINSFVNGVYAFGFLFML) traverse the membrane as a helical segment. Topologically, residues 450-538 (PQLFVNYKLK…EKATRAPHTD (89 aa)) are cytoplasmic.

Belongs to the CLPTM1 family. Ubiquitously expressed.

The protein localises to the endoplasmic reticulum membrane. It catalyses the reaction a 6-(alpha-D-glucosaminyl)-1-(1,2-diacyl-sn-glycero-3-phospho)-1D-myo-inositol(in) = a 6-(alpha-D-glucosaminyl)-1-(1,2-diacyl-sn-glycero-3-phospho)-1D-myo-inositol(out). The catalysed reaction is 6-(alpha-D-glucosaminyl)-(1-octadecanoyl,2-(9Z)-octadecenoyl-sn-glycero-3-phospho)-1D-myo-inositol(in) = 6-(alpha-D-glucosaminyl)-(1-octadecanoyl,2-(9Z)-octadecenoyl-sn-glycero-3-phospho)-1D-myo-inositol(out). The enzyme catalyses a 1,2-diacyl-sn-glycero-3-phospho-(1D-myo-inositol)(in) = a 1,2-diacyl-sn-glycero-3-phospho-(1D-myo-inositol)(out). It carries out the reaction a 1,2-diacyl-sn-glycero-3-phosphocholine(in) = a 1,2-diacyl-sn-glycero-3-phosphocholine(out). It catalyses the reaction a 1,2-diacyl-sn-glycero-3-phosphoethanolamine(in) = a 1,2-diacyl-sn-glycero-3-phosphoethanolamine(out). Its function is as follows. Scramblase that mediates the translocation of glucosaminylphosphatidylinositol (alpha-D-GlcN-(1-6)-(1,2-diacyl-sn-glycero-3-phospho)-1D-myo-inositol, GlcN-PI) across the endoplasmic reticulum (ER) membrane, from the cytosolic leaflet to the luminal leaflet of the ER membrane, where it participates in the biosynthesis of glycosylphosphatidylinositol (GPI). GPI is a lipid glycoconjugate involved in post-translational modification of proteins. Can also translocate 1,2-diacyl-sn-glycero-3-phospho-(1D-myo-inositol) (phosphatidylinositol or PI), as well as several other phospholipids (1,2-diacyl-sn-glycero-3-phosphocholine, 1,2-diacyl-sn-glycero-3-phosphoethanolamine), and N-acetylglucosaminylphosphatidylinositol (GlcNAc-PI) in vitro. This Homo sapiens (Human) protein is Lipid scramblase CLPTM1L (CLPTM1L).